Reading from the N-terminus, the 265-residue chain is MPRIAIVGGSGVYDFPAENKREETVKTPYGEVKITVGVVGDEEVAFLARHGKGHSIPPHKINYRANIWALYELGVERIIATSAVGSMNPEMKPGDFVILDQIIDFTVSRPRTFYDGEESPHERKFVAHVDFTEPYCPEIRKALITAARNLGLPYHPRGTYVCTEGPRFETAAEIRAYRILGGDVVGMTQCPEAILARELEMCYATVAIVTNYAAGMSGKKLTHSEVVELMQKKSEDIVKLILAAIPLIPKERRCGCKDALKGATG.

Phosphate contacts are provided by residues Ser-10, Arg-49 to His-50, and Ser-82 to Ala-83. 2 cysteine pairs are disulfide-bonded: Cys-136-Cys-202 and Cys-162-Cys-190. Residue Met-187 participates in substrate binding. Residue Thr-188 coordinates phosphate. Asn-211–Ala-213 contributes to the substrate binding site. Cysteines 254 and 256 form a disulfide.

It belongs to the PNP/MTAP phosphorylase family. MTAP subfamily. As to quaternary structure, homohexamer. Dimer of a homotrimer.

The catalysed reaction is a purine D-ribonucleoside + phosphate = a purine nucleobase + alpha-D-ribose 1-phosphate. It carries out the reaction guanosine + phosphate = alpha-D-ribose 1-phosphate + guanine. It catalyses the reaction inosine + phosphate = alpha-D-ribose 1-phosphate + hypoxanthine. It participates in purine metabolism; purine nucleoside salvage. Purine nucleoside phosphorylase which is highly specific for 6-oxopurine nucleosides. Cleaves guanosine or inosine to respective bases and sugar-1-phosphate molecules. Involved in purine salvage. This is 6-oxopurine nucleoside phosphorylase from Pyrococcus furiosus (strain ATCC 43587 / DSM 3638 / JCM 8422 / Vc1).